The sequence spans 206 residues: Phosphoribosylglycinamide formyltransferase (206 aa).

A N(1)-(5-phospho-beta-D-ribosyl)glycinamide-binding site is contributed by 13-15 (GTN). Residues 99–102 (MIIL) and N121 each bind (6R)-10-formyltetrahydrofolate. H123 serves as the catalytic Proton donor. Residue D163 participates in (6R)-10-formyltetrahydrofolate binding. E192 contacts N(1)-(5-phospho-beta-D-ribosyl)glycinamide.

Belongs to the GART family.

The catalysed reaction is N(1)-(5-phospho-beta-D-ribosyl)glycinamide + (6R)-10-formyltetrahydrofolate = N(2)-formyl-N(1)-(5-phospho-beta-D-ribosyl)glycinamide + (6S)-5,6,7,8-tetrahydrofolate + H(+). The protein operates within purine metabolism; IMP biosynthesis via de novo pathway; N(2)-formyl-N(1)-(5-phospho-D-ribosyl)glycinamide from N(1)-(5-phospho-D-ribosyl)glycinamide (10-formyl THF route): step 1/1. This chain is Phosphoribosylglycinamide formyltransferase (purN), found in Dictyostelium discoideum (Social amoeba).